We begin with the raw amino-acid sequence, 215 residues long: Transmembrane protein 267 (215 aa).

A run of 3 helical transmembrane segments spans residues 77–97 (FGEV…HFFQ), 114–134 (FLHC…AVHL), and 178–198 (SSFY…LMYL).

It is found in the membrane. The polypeptide is Transmembrane protein 267 (Mus musculus (Mouse)).